Reading from the N-terminus, the 304-residue chain is Nod factor export ATP-binding protein I (304 aa).

Residues 6–236 enclose the ABC transporter domain; that stretch reads IDFQQVEKRY…EIGCDVIEIY (231 aa). 38–45 provides a ligand contact to ATP; the sequence is GPNGAGKT.

It belongs to the ABC transporter superfamily. Lipooligosaccharide exporter (TC 3.A.1.102) family. In terms of assembly, the complex is composed of two ATP-binding proteins (NodI) and two transmembrane proteins (NodJ).

It localises to the cell inner membrane. Functionally, part of the ABC transporter complex NodIJ involved in the export of the nodulation factors (Nod factors), the bacterial signal molecules that induce symbiosis and subsequent nodulation induction. Nod factors are LCO (lipo-chitin oligosaccharide), a modified beta-1,4-linked N-acetylglucosamine oligosaccharide. This subunit is responsible for energy coupling to the transport system. The polypeptide is Nod factor export ATP-binding protein I (Burkholderia thailandensis (strain ATCC 700388 / DSM 13276 / CCUG 48851 / CIP 106301 / E264)).